Reading from the N-terminus, the 363-residue chain is 3-isopropylmalate dehydrogenase (363 aa).

Residue 78–91 (GPKWEHLPPDQQPE) coordinates NAD(+). 4 residues coordinate substrate: R99, R109, R138, and D227. Residues D227, D251, and D255 each coordinate Mg(2+). An NAD(+)-binding site is contributed by 285 to 297 (GSAPDIAGKNIAN).

This sequence belongs to the isocitrate and isopropylmalate dehydrogenases family. LeuB type 1 subfamily. As to quaternary structure, homodimer. Requires Mg(2+) as cofactor. The cofactor is Mn(2+).

It is found in the cytoplasm. The catalysed reaction is (2R,3S)-3-isopropylmalate + NAD(+) = 4-methyl-2-oxopentanoate + CO2 + NADH. It functions in the pathway amino-acid biosynthesis; L-leucine biosynthesis; L-leucine from 3-methyl-2-oxobutanoate: step 3/4. Its function is as follows. Catalyzes the oxidation of 3-carboxy-2-hydroxy-4-methylpentanoate (3-isopropylmalate) to 3-carboxy-4-methyl-2-oxopentanoate. The product decarboxylates to 4-methyl-2 oxopentanoate. In Shigella flexneri, this protein is 3-isopropylmalate dehydrogenase.